We begin with the raw amino-acid sequence, 116 residues long: Large ribosomal subunit protein bL20 (116 aa).

The protein belongs to the bacterial ribosomal protein bL20 family.

Its function is as follows. Binds directly to 23S ribosomal RNA and is necessary for the in vitro assembly process of the 50S ribosomal subunit. It is not involved in the protein synthesizing functions of that subunit. The polypeptide is Large ribosomal subunit protein bL20 (Helicobacter acinonychis (strain Sheeba)).